The chain runs to 59 residues: Embryonic testis differentiation protein (59 aa).

The segment at 1 to 28 is disordered; sequence MDEKNPEAVPRPPEQNTELVPPKKSKSK.

In terms of tissue distribution, specifically expressed in testis.

The chain is Embryonic testis differentiation protein from Mus musculus (Mouse).